The chain runs to 30 residues: NADH-ubiquinone oxidoreductase chain 5 (30 aa).

Residues 7–27 (NIIIIINSSLIIILFSSIFFF) form a helical membrane-spanning segment.

This sequence belongs to the complex I subunit 5 family.

The protein resides in the mitochondrion inner membrane. It carries out the reaction a ubiquinone + NADH + 5 H(+)(in) = a ubiquinol + NAD(+) + 4 H(+)(out). Functionally, core subunit of the mitochondrial membrane respiratory chain NADH dehydrogenase (Complex I) that is believed to belong to the minimal assembly required for catalysis. Complex I functions in the transfer of electrons from NADH to the respiratory chain. The immediate electron acceptor for the enzyme is believed to be ubiquinone. This chain is NADH-ubiquinone oxidoreductase chain 5 (ND5), found in Pisaster ochraceus (Ochre sea star).